Reading from the N-terminus, the 87-residue chain is uncharacterized protein (87 aa).

This is an uncharacterized protein from Ureaplasma parvum serovar 3 (strain ATCC 700970).